Consider the following 515-residue polypeptide: E3 ubiquitin-protein ligase RNF38 (515 aa).

The Bipartite nuclear localization signal 1 motif lies at 57–71 (DSPSPKRQRLSHSVF). Residues 73-141 (YTSASPAPSP…LSRHNSISQD (69 aa)) form a disordered region. The segment covering 89–104 (MTSNRQPPSVRPSQHH) has biased composition (polar residues). A Bipartite nuclear localization signal 2 motif is present at residues 115-131 (RNRRSPPVRRQRGRRDR). Over residues 115–134 (RNRRSPPVRRQRGRRDRLSR) the composition is skewed to basic residues. The RING-type zinc finger occupies 463-504 (CVVCMCDFESRQLLRVLPCNHEFHAKCVDKWLKANRTCPICR).

Widely expressed with highest levels in testis.

The protein resides in the nucleus. The catalysed reaction is S-ubiquitinyl-[E2 ubiquitin-conjugating enzyme]-L-cysteine + [acceptor protein]-L-lysine = [E2 ubiquitin-conjugating enzyme]-L-cysteine + N(6)-ubiquitinyl-[acceptor protein]-L-lysine.. It participates in protein modification; protein ubiquitination. Functionally, acts as an E3 ubiquitin-protein ligase able to ubiquitinate p53/TP53 which promotes its relocalization to discrete foci associated with PML nuclear bodies. Exhibits preference for UBE2D2 as a E2 enzyme. The protein is E3 ubiquitin-protein ligase RNF38 of Homo sapiens (Human).